The following is a 204-amino-acid chain: Somatotropin (204 aa).

A signal peptide spans 1 to 17; sequence MDRVVLMLSVLSLGVSS. Gln18 carries the post-translational modification Pyrrolidone carboxylic acid. A Zn(2+)-binding site is contributed by His36. The cysteines at positions 69 and 177 are disulfide-linked. Glu186 contributes to the Zn(2+) binding site. Cys194 and Cys202 are disulfide-bonded.

Belongs to the somatotropin/prolactin family.

Its subcellular location is the secreted. Its function is as follows. Growth hormone plays an important role in growth control and is involved in the regulation of several anabolic processes. Implicated as an osmoregulatory substance important for seawater adaptation. The polypeptide is Somatotropin (gh) (Acanthopagrus butcheri (Australian black bream)).